Reading from the N-terminus, the 775-residue chain is Mitochondrial 15S rRNA processing factor CCM1 (775 aa).

Residues 1 to 18 (MLRYARTVRFSQVGNSVR) constitute a mitochondrion transit peptide. Residues 35-65 (HDRKSPSHSLSPISNLPNHNDSSTERARKTL) are disordered. Over residues 41-55 (SHSLSPISNLPNHND) the composition is skewed to polar residues. Basic and acidic residues predominate over residues 56–65 (SSTERARKTL). PPR repeat units lie at residues 289-323 (PKRTCEVMVQAYGKNGNINRIQDLLSEMKLHKIEI), 324-355 (SGMALTNILATCVYKARDHKQAVEIFDTMRFQ), 362-396 (GTRAYQDIIVSYVNNDDIEKAIDIYREMITEKIEP), 397-432 (NQQIMVALARGCASREAFKFKSWDFIFEINRNNWTP), and 433-467 (TLPTYEYMLYLSSRDGDLALTRALYSRLLKDNTVS).

This sequence belongs to the CCM1 family. In terms of assembly, binds to mitochondrial small subunit 15S rRNA.

It localises to the mitochondrion. Functionally, regulates mitochondrial small subunit maturation by controlling 15S rRNA 5'-end processing. Localizes to the 5' precursor of the 15S rRNA in a position that is subsequently occupied by mS47 in the mature yeast mtSSU. Uses structure and sequence-specific RNA recognition, binding to a single-stranded region of the precursor and specifically recognizing bases -6 to -1. The exchange of Ccm1 for mS47 is coupled to the irreversible removal of precursor rRNA that is accompanied by conformational changes of the mitoribosomal proteins uS5m and mS26. These conformational changes signal completion of 5'-end rRNA processing through protection of the mature 5'-end of the 15S rRNA and stabilization of mS47. The removal of the 5' precursor together with the dissociation of Ccm1 may be catalyzed by the 5'-3' exoribonuclease Pet127. Involved in the specific removal of group I introns in mitochondrial encoded transcripts. The protein is Mitochondrial 15S rRNA processing factor CCM1 (CCM1) of Scheffersomyces stipitis (strain ATCC 58785 / CBS 6054 / NBRC 10063 / NRRL Y-11545) (Yeast).